The sequence spans 207 residues: Putative 3-methyladenine DNA glycosylase (207 aa).

Belongs to the DNA glycosylase MPG family.

The polypeptide is Putative 3-methyladenine DNA glycosylase (Burkholderia cenocepacia (strain HI2424)).